Reading from the N-terminus, the 335-residue chain is Mevalonate kinase (335 aa).

ATP is bound at residue P111 to A121. Residue D162 is the Proton acceptor of the active site.

Belongs to the GHMP kinase family. Mevalonate kinase subfamily. In terms of assembly, homodimer. Mg(2+) serves as cofactor.

It is found in the cytoplasm. It carries out the reaction (R)-mevalonate + ATP = (R)-5-phosphomevalonate + ADP + H(+). The protein operates within isoprenoid biosynthesis; isopentenyl diphosphate biosynthesis via mevalonate pathway; isopentenyl diphosphate from (R)-mevalonate: step 1/3. Its function is as follows. Catalyzes the phosphorylation of (R)-mevalonate (MVA) to (R)-mevalonate 5-phosphate (MVAP). Functions in the mevalonate (MVA) pathway leading to isopentenyl diphosphate (IPP), a key precursor for the biosynthesis of isoprenoid compounds such as archaeal membrane lipids. The protein is Mevalonate kinase of Pyrococcus horikoshii (strain ATCC 700860 / DSM 12428 / JCM 9974 / NBRC 100139 / OT-3).